The primary structure comprises 215 residues: Cytochrome c biogenesis ATP-binding export protein CcmA (215 aa).

An ABC transporter domain is found at 3-215; that stretch reads LEAENLAGER…MAAFSVEDIA (213 aa). 35–42 serves as a coordination point for ATP; that stretch reads GPNGSGKS.

This sequence belongs to the ABC transporter superfamily. CcmA exporter (TC 3.A.1.107) family. The complex is composed of two ATP-binding proteins (CcmA) and two transmembrane proteins (CcmB).

It localises to the cell inner membrane. It catalyses the reaction heme b(in) + ATP + H2O = heme b(out) + ADP + phosphate + H(+). Its function is as follows. Part of the ABC transporter complex CcmAB involved in the biogenesis of c-type cytochromes; once thought to export heme, this seems not to be the case, but its exact role is uncertain. Responsible for energy coupling to the transport system. In Brucella abortus (strain 2308), this protein is Cytochrome c biogenesis ATP-binding export protein CcmA.